We begin with the raw amino-acid sequence, 667 residues long: Fatty acyl-CoA synthetase A (667 aa).

Belongs to the ATP-dependent AMP-binding enzyme family.

It localises to the endosome membrane. The catalysed reaction is a long-chain fatty acid + ATP + CoA = a long-chain fatty acyl-CoA + AMP + diphosphate. In terms of biological role, long chain fatty acid acyl-CoA synthetases catalyze the formation of a thiester bond between a free fatty acid and coenzyme A during fatty acid metabolic process. May mediate fatty acid retrieval from the lumen of endosomes into the cytoplasm. The sequence is that of Fatty acyl-CoA synthetase A (fcsA) from Dictyostelium discoideum (Social amoeba).